A 431-amino-acid polypeptide reads, in one-letter code: Trigger factor (431 aa).

The PPIase FKBP-type domain occupies 163-248 (GHFAVIDFTG…LSEIKVKELP (86 aa)).

It belongs to the FKBP-type PPIase family. Tig subfamily.

The protein resides in the cytoplasm. It carries out the reaction [protein]-peptidylproline (omega=180) = [protein]-peptidylproline (omega=0). Its function is as follows. Involved in protein export. Acts as a chaperone by maintaining the newly synthesized protein in an open conformation. Functions as a peptidyl-prolyl cis-trans isomerase. The chain is Trigger factor from Geobacter sulfurreducens (strain ATCC 51573 / DSM 12127 / PCA).